Here is a 123-residue protein sequence, read N- to C-terminus: SGSCTTKTCWTMLPNFRSVGDVLKEKYERTLQVEPVKAKRTRRPTFLKVKDSENYRKPRLSHLVFLHRSPNYCEFDENNGSMGTVGRRCNRTSTSTDSCDLMCCGRGYNTHQYTKIWQCNCKF.

Serine 1 carries O-palmitoleoyl serine; by PORCN lipidation. Asparagine 79 and asparagine 90 each carry an N-linked (GlcNAc...) asparagine glycan. Residues cysteine 89 and cysteine 104 are joined by a disulfide bond.

The protein belongs to the Wnt family. In terms of processing, palmitoleoylation is required for efficient binding to frizzled receptors. Depalmitoleoylation leads to Wnt signaling pathway inhibition.

Its subcellular location is the secreted. The protein localises to the extracellular space. It localises to the extracellular matrix. Its function is as follows. Ligand for members of the frizzled family of seven transmembrane receptors. Probable developmental protein. May be a signaling molecule which affects the development of discrete regions of tissues. Is likely to signal over only few cell diameters. This Strongylocentrotus purpuratus (Purple sea urchin) protein is Protein Wnt-7 (WNT-7).